The primary structure comprises 383 residues: F-box/kelch-repeat protein At4g19330 (383 aa).

The disordered stretch occupies residues 1–27; the sequence is MAYLSFKSNMERTPRESNTPCPPPQPS. Positions 28-79 constitute an F-box domain; it reads PSLFSSLPDDIVLNILARISTSYYQTLSLVSKTFRLLILSKELDMERSYLGT. 3 Kelch repeats span residues 147–192, 193–239, and 272–318; these read ETYE…VLDG, KLYV…NIQT, and STCE…SEIG.

Functionally, involved in seed germination. The protein is F-box/kelch-repeat protein At4g19330 of Arabidopsis thaliana (Mouse-ear cress).